A 104-amino-acid chain; its full sequence is SOSS complex subunit C (104 aa).

Residue Ala2 is modified to N-acetylalanine. Ser50 is subject to Phosphoserine.

This sequence belongs to the SOSS-C family. In terms of assembly, component of the SOSS complex, composed of SOSS-B (SOSS-B1/NABP2 or SOSS-B2/NABP1), SOSS-A/INTS3 and SOSS-C/INIP. SOSS complexes containing SOSS-B1/NABP2 are more abundant than complexes containing SOSS-B2/NABP1. Interacts with INTS3; the interaction is direct.

Its subcellular location is the nucleus. Component of the SOSS complex, a multiprotein complex that functions downstream of the MRN complex to promote DNA repair and G2/M checkpoint. The SOSS complex associates with single-stranded DNA at DNA lesions and influences diverse endpoints in the cellular DNA damage response including cell-cycle checkpoint activation, recombinational repair and maintenance of genomic stability. Required for efficient homologous recombination-dependent repair of double-strand breaks (DSBs) and ATM-dependent signaling pathways. This Mus musculus (Mouse) protein is SOSS complex subunit C (Inip).